A 441-amino-acid chain; its full sequence is GTPase Der (441 aa).

2 consecutive EngA-type G domains span residues 4 to 169 (PVVA…PEDI) and 178 to 353 (IKVA…DQAA). GTP is bound by residues 10-17 (GRPNVGKS), 57-61 (DTGGI), 120-123 (NKVD), 184-191 (GKPNAGKS), 231-235 (DTAGI), and 296-299 (NKWD). The 85-residue stretch at 354-438 (FRISTGMLND…PIRFIHRQRE (85 aa)) folds into the KH-like domain.

The protein belongs to the TRAFAC class TrmE-Era-EngA-EngB-Septin-like GTPase superfamily. EngA (Der) GTPase family. In terms of assembly, associates with the 50S ribosomal subunit.

GTPase that plays an essential role in the late steps of ribosome biogenesis. The protein is GTPase Der of Ruminiclostridium cellulolyticum (strain ATCC 35319 / DSM 5812 / JCM 6584 / H10) (Clostridium cellulolyticum).